Here is a 1312-residue protein sequence, read N- to C-terminus: MTDYPFYKPDDETNIIYNININKKEGFSAIKSCSLAKLIEKLTSTKQLHTYFSSAFFLTYRDFTTPLEIINLLISRYTGPPPDSSKDSLRLFEIEVDIVQANVLSIFRTLIGTLIQVDFDTPKLSSSIIEFFNSLPESVKNELFLEFFKAKKMARPPGSIPKPVNSNIISSAASTMRFSYSVSPKTQSPNSTNNVLSGLLSNNGSNTMNGINGTSNNNVNSNNNNNNGTTNISSPNFDPSRSSMKMGKGIMKLLQSNIANFNNQQNGGGGGGSNNGTSPQSSPSSTLSSTNSLFNQQPSLSMLNDDGSVQNNNNNNNNNNNNNNVNEISTINVQLPPSTPPINGIPGEKTAFLPEAIAKELTIMEWELITALSVSDITSKEWNKSVNIQNLTTWFNRISSWVSTKIISKETPEERAIIIEAFINIANFAKELKNYNCVMEILGSLHGSSISRLKSSWALLSQKTNDMFQILNNLMTTDGNFKNYRKILTTVLPNEPCIPYLGLFLTDYTYLDESNPSLSTDSNLINIDRIFLISTRVQEFFQLFTNCNYTFISNMSVRDAILGEKVWDENEIFRLSKIREETSSLQSLKESNGIGNSNSTSGGSSSSLVNKDGSGGGGGSGGGGSVNSKGDGKGDGKDNRDGRGDGNSNCGNGSGISSKDKDLLLSSSSSAASHTVRRKNFVTKYRMSFTGNDPLPSVSSTLSEREWKILTTNSKTIIYPRGKTVLSVGETNTNIYRVISGRVKVETLKSFNSSDADLGAGGGGGGDNRGEDNSLMAIKARNRLSLNLPAQDDGYYVEEGEIFGQESFLYTDRPMLSNIIVDSGECELMEIEKSFVLQLFASEHQLSATFYKFIGVIQAQLLKSIYINFTSNYGNGGSGGSGSNGNGGGSSNGAGGGGLSSSVSIGNLNSPNINRIDFKRRSTIFETPSSLDILRDGNDSSFRTKFGLSQDEVIIKRYQCKHNNMNGTLYITKHNLCFEGKFLGINKNKTIPFDRTDKILTVDKNIMTVTTKEKVKKFTFKSHDDLNEGYGISVQIWANHLNINVKQQLQLQQQQLQQQQQQPSQQPSQQQSQSSQLQQSVSASSTTPPVPNSPKVGRGESFSNIKDLPSKDEWNQILKGTKPLTFKKGEILICEGVEYQKMFQIVKGECSVVKSLLPTPLDQNIFNNINNNNNNNNNNNNNNNNNNNNNNNNNNNGNNNNSIFKNNSSISNTNSNTSIDGGVGGGLSPQTLVDPKNSVIVSKLTHGSIFGEMSFLLPGGSATSLVVSSDEVEVYIIESYFLHILLKSKPYLASKFYKYLACVLETRVRNLT.

Residues 26–155 (GFSAIKSCSL…EFFKAKKMAR (130 aa)) form the N-terminal Ras-GEF domain. Composition is skewed to low complexity over residues 206-236 (NTMN…SSPN) and 275-296 (NGTS…LFNQ). Disordered stretches follow at residues 206-244 (NTMN…RSSM) and 260-326 (NFNN…NNVN). A compositionally biased stretch (polar residues) spans 297–310 (QPSLSMLNDDGSVQ). A compositionally biased stretch (low complexity) spans 311–326 (NNNNNNNNNNNNNNVN). The Ras-GEF domain maps to 353–582 (LPEAIAKELT…FRLSKIREET (230 aa)). The disordered stretch occupies residues 586-658 (QSLKESNGIG…NCGNGSGISS (73 aa)). Residues 591–612 (SNGIGNSNSTSGGSSSSLVNKD) are compositionally biased toward low complexity. Gly residues predominate over residues 613 to 625 (GSGGGGGSGGGGS). Residues 630–644 (GDGKGDGKDNRDGRG) are compositionally biased toward basic and acidic residues. Residues 646 to 657 (GNSNCGNGSGIS) are compositionally biased toward low complexity. Residue 698–857 (VSSTLSEREW…ATFYKFIGVI (160 aa)) coordinates a nucleoside 3',5'-cyclic phosphate. Positions 940–1006 (SSFRTKFGLS…DKILTVDKNI (67 aa)) constitute a GRAM domain. Positions 1059 to 1087 (QQQQPSQQPSQQQSQSSQLQQSVSASSTT) are enriched in low complexity. 2 disordered regions span residues 1059-1108 (QQQQ…IKDL) and 1167-1210 (NNIN…NSSI). A nucleoside 3',5'-cyclic phosphate contacts are provided by residues 1105-1218 (IKDL…SNTS) and 1182-1303 (NNNN…LACV).

Its function is as follows. Promotes the exchange of Ras-bound GDP by GTP. Induces the formation of substrate-attached pseudopodia, that leads to increased adhesion and thereby negatively influencing cell speed and polarity. This is Cyclic GMP-binding protein D (gbpD) from Dictyostelium discoideum (Social amoeba).